The primary structure comprises 1392 residues: DNA-directed RNA polymerase subunit beta'' (1392 aa).

The Zn(2+) site is built by cysteine 224, cysteine 295, cysteine 302, and cysteine 305.

The protein belongs to the RNA polymerase beta' chain family. RpoC2 subfamily. As to quaternary structure, in plastids the minimal PEP RNA polymerase catalytic core is composed of four subunits: alpha, beta, beta', and beta''. When a (nuclear-encoded) sigma factor is associated with the core the holoenzyme is formed, which can initiate transcription. Zn(2+) serves as cofactor.

Its subcellular location is the plastid. It is found in the chloroplast. It carries out the reaction RNA(n) + a ribonucleoside 5'-triphosphate = RNA(n+1) + diphosphate. Its function is as follows. DNA-dependent RNA polymerase catalyzes the transcription of DNA into RNA using the four ribonucleoside triphosphates as substrates. The chain is DNA-directed RNA polymerase subunit beta'' from Nicotiana tomentosiformis (Tobacco).